A 472-amino-acid polypeptide reads, in one-letter code: NADH-quinone oxidoreductase subunit N 2 (472 aa).

13 consecutive transmembrane segments (helical) span residues 3–23, 34–54, 67–87, 106–126, 156–176, 198–218, 233–253, 263–283, 291–311, 317–337, 360–380, 398–418, and 441–461; these read WMSF…LLLS, HVAA…SVGA, LFSQ…VTLC, FVCT…VVFI, FLVG…LYGA, VVIG…VFPF, VSAY…VRVI, LVHV…LAAI, LLAY…LSMN, AAVF…LVLV, ILAL…PTVG, TLVL…LLVI, and LLSG…NQII.

Belongs to the complex I subunit 2 family. As to quaternary structure, NDH-1 is composed of 14 different subunits. Subunits NuoA, H, J, K, L, M, N constitute the membrane sector of the complex.

It is found in the cell inner membrane. It carries out the reaction a quinone + NADH + 5 H(+)(in) = a quinol + NAD(+) + 4 H(+)(out). Its function is as follows. NDH-1 shuttles electrons from NADH, via FMN and iron-sulfur (Fe-S) centers, to quinones in the respiratory chain. The immediate electron acceptor for the enzyme in this species is believed to be ubiquinone. Couples the redox reaction to proton translocation (for every two electrons transferred, four hydrogen ions are translocated across the cytoplasmic membrane), and thus conserves the redox energy in a proton gradient. In Syntrophobacter fumaroxidans (strain DSM 10017 / MPOB), this protein is NADH-quinone oxidoreductase subunit N 2.